The following is a 153-amino-acid chain: Regulator of sigma D (153 aa).

Belongs to the Rsd/AlgQ family. Interacts with RpoD.

The protein localises to the cytoplasm. Binds RpoD and negatively regulates RpoD-mediated transcription activation by preventing the interaction between the primary sigma factor RpoD with the catalytic core of the RNA polymerase and with promoter DNA. May be involved in replacement of the RNA polymerase sigma subunit from RpoD to RpoS during the transition from exponential growth to the stationary phase. The protein is Regulator of sigma D of Pectobacterium carotovorum subsp. carotovorum (strain PC1).